The sequence spans 1396 residues: Helicase ARIP4 (1396 aa).

The disordered stretch occupies residues 1-103 (MSDASISGSE…LQKPANLRRN (103 aa)). Positions 11–49 (PELDPEDMEEEEEDDEDDDEEEEEEEDEEDNDGDDEDDK) are enriched in acidic residues. Over residues 75–84 (RSTTSGQSGQ) the composition is skewed to polar residues. The Helicase ATP-binding domain occupies 290–510 (RFSGSSGFGC…WCMVDFVRPD (221 aa)). 303 to 310 (HSMGLGKT) serves as a coordination point for ATP. The DEAH box signature appears at 461 to 464 (DEGH). An LXXLL motif 1 motif is present at residues 549–553 (LHSLL). Positions 717 to 891 (KMVLLFHLIE…RVVDDLNPEV (175 aa)) constitute a Helicase C-terminal domain. Disordered stretches follow at residues 1117–1168 (SGKQ…PDSP) and 1194–1250 (NLGL…STMN). 2 stretches are compositionally biased toward polar residues: residues 1128-1148 (QATS…RHST) and 1218-1238 (DQSS…SYPN). Residues 1273 to 1277 (LPSLL) carry the LXXLL motif 2 motif. The tract at residues 1340-1396 (GLPTNNPASTFPGYLSSHSNYQASPGTSSRPLPSGETELGSCEEDGRDDDVVEVTGE) is disordered. Polar residues predominate over residues 1355–1370 (SSHSNYQASPGTSSRP). Residues 1380 to 1396 (SCEEDGRDDDVVEVTGE) are compositionally biased toward acidic residues.

The protein belongs to the SNF2/RAD54 helicase family.

The protein localises to the nucleus. The catalysed reaction is ATP + H2O = ADP + phosphate + H(+). DNA helicase that modulates androgen receptor (AR)-dependent transactivation in a promoter-dependent manner. The sequence is that of Helicase ARIP4 (rad54l2) from Xenopus tropicalis (Western clawed frog).